Here is a 524-residue protein sequence, read N- to C-terminus: Putative cysteine ligase BshC (524 aa).

The stretch at 437 to 457 (AQALDRSARKINYQIEKMERK) forms a coiled coil.

Belongs to the BshC family.

The polypeptide is Putative cysteine ligase BshC (Solibacter usitatus (strain Ellin6076)).